The following is a 287-amino-acid chain: Ribonuclease Z (287 aa).

Positions 64, 66, 68, 69, 124, 191, and 250 each coordinate Zn(2+). Residue Asp68 is the Proton acceptor of the active site.

This sequence belongs to the RNase Z family. Homodimer. The cofactor is Zn(2+).

The enzyme catalyses Endonucleolytic cleavage of RNA, removing extra 3' nucleotides from tRNA precursor, generating 3' termini of tRNAs. A 3'-hydroxy group is left at the tRNA terminus and a 5'-phosphoryl group is left at the trailer molecule.. In terms of biological role, zinc phosphodiesterase, which displays some tRNA 3'-processing endonuclease activity. Probably involved in tRNA maturation, by removing a 3'-trailer from precursor tRNA. The chain is Ribonuclease Z from Pyrobaculum neutrophilum (strain DSM 2338 / JCM 9278 / NBRC 100436 / V24Sta) (Thermoproteus neutrophilus).